We begin with the raw amino-acid sequence, 257 residues long: Ribosomal RNA small subunit methyltransferase J (257 aa).

S-adenosyl-L-methionine is bound by residues 107–108 (RD), 123–124 (ER), and Asp177.

This sequence belongs to the methyltransferase superfamily. RsmJ family.

The protein resides in the cytoplasm. It catalyses the reaction guanosine(1516) in 16S rRNA + S-adenosyl-L-methionine = N(2)-methylguanosine(1516) in 16S rRNA + S-adenosyl-L-homocysteine + H(+). In terms of biological role, specifically methylates the guanosine in position 1516 of 16S rRNA. The polypeptide is Ribosomal RNA small subunit methyltransferase J (Haemophilus influenzae (strain PittGG)).